The sequence spans 428 residues: Immunoglobulin superfamily containing leucine-rich repeat protein (428 aa).

The N-terminal stretch at Met-1 to Ala-18 is a signal peptide. The region spanning Cys-19–Ala-50 is the LRRNT domain. Asn-51 is a glycosylation site (N-linked (GlcNAc...) asparagine). LRR repeat units follow at residues Asn-51 to Glu-72, Leu-75 to Ser-98, His-99 to Ser-122, Ala-123 to Ser-144, and Ala-147 to Pro-168. The 52-residue stretch at Asn-180–Ala-231 folds into the LRRCT domain. An Ig-like domain is found at Pro-232–Ala-343. Cys-257 and Cys-327 are joined by a disulfide. N-linked (GlcNAc...) asparagine glycosylation is present at Asn-309.

In terms of tissue distribution, detected in thyroid, heart, retina and spinal cord.

It localises to the secreted. This is Immunoglobulin superfamily containing leucine-rich repeat protein (Islr) from Mus musculus (Mouse).